A 240-amino-acid polypeptide reads, in one-letter code: tRNA (guanine-N(1)-)-methyltransferase (240 aa).

S-adenosyl-L-methionine is bound by residues glycine 108 and 127–132; that span reads IGDYVL.

Belongs to the RNA methyltransferase TrmD family. As to quaternary structure, homodimer.

Its subcellular location is the cytoplasm. The catalysed reaction is guanosine(37) in tRNA + S-adenosyl-L-methionine = N(1)-methylguanosine(37) in tRNA + S-adenosyl-L-homocysteine + H(+). Specifically methylates guanosine-37 in various tRNAs. The protein is tRNA (guanine-N(1)-)-methyltransferase of Lactobacillus johnsonii (strain CNCM I-12250 / La1 / NCC 533).